The chain runs to 195 residues: HTH-type transcriptional regulator BetI (195 aa).

Residues 8-68 (EIRRAQLIDA…ATMRHVLRDL (61 aa)) enclose the HTH tetR-type domain. The H-T-H motif DNA-binding region spans 31–50 (TLASVAQRANISTGIVSHYF).

It participates in amine and polyamine biosynthesis; betaine biosynthesis via choline pathway [regulation]. Repressor involved in the biosynthesis of the osmoprotectant glycine betaine. It represses transcription of the choline transporter BetT and the genes of BetAB involved in the synthesis of glycine betaine. This is HTH-type transcriptional regulator BetI from Burkholderia mallei (strain NCTC 10247).